The sequence spans 389 residues: 3-ketoacyl-CoA thiolase (389 aa).

Cys-91 serves as the catalytic Acyl-thioester intermediate. Residues His-343 and Cys-373 each act as proton acceptor in the active site.

It belongs to the thiolase-like superfamily. Thiolase family. As to quaternary structure, heterotetramer of two alpha chains (FadB) and two beta chains (FadA).

The protein resides in the cytoplasm. It catalyses the reaction an acyl-CoA + acetyl-CoA = a 3-oxoacyl-CoA + CoA. It functions in the pathway lipid metabolism; fatty acid beta-oxidation. Catalyzes the final step of fatty acid oxidation in which acetyl-CoA is released and the CoA ester of a fatty acid two carbons shorter is formed. The chain is 3-ketoacyl-CoA thiolase from Citrobacter koseri (strain ATCC BAA-895 / CDC 4225-83 / SGSC4696).